The primary structure comprises 270 residues: tRNA (guanine-N(1)-)-methyltransferase (270 aa).

Residues G117 and 137–142 (IGDYVL) contribute to the S-adenosyl-L-methionine site.

It belongs to the RNA methyltransferase TrmD family. Homodimer.

Its subcellular location is the cytoplasm. It carries out the reaction guanosine(37) in tRNA + S-adenosyl-L-methionine = N(1)-methylguanosine(37) in tRNA + S-adenosyl-L-homocysteine + H(+). Specifically methylates guanosine-37 in various tRNAs. This is tRNA (guanine-N(1)-)-methyltransferase from Heliobacterium modesticaldum (strain ATCC 51547 / Ice1).